A 64-amino-acid polypeptide reads, in one-letter code: MPKNKSHSGASKRFKITGSGKVLRERAGKRHLLEHKSSRVTRRLTGNAEMAPGDAAKIKKLLGK.

Belongs to the bacterial ribosomal protein bL35 family.

This is Large ribosomal subunit protein bL35 from Streptomyces coelicolor (strain ATCC BAA-471 / A3(2) / M145).